The chain runs to 378 residues: Ferredoxin--NADP reductase, root isozyme 1, chloroplastic (378 aa).

The N-terminal 65 residues, 1-65, are a transit peptide targeting the chloroplast; that stretch reads MALSTTPSQM…KRSTICMSLQ (65 aa). An FAD-binding FR-type domain is found at 93-221; the sequence is KEPYTATIVS…TGPSGKVMLL (129 aa). A disulfide bridge links cysteine 196 with cysteine 201. Phosphoserine is present on serine 197. Position 229 is a phosphothreonine (threonine 229). An NADP(+)-binding site is contributed by 231 to 249; the sequence is IMIATGTGVAPYRGYLRRM. Residues 349 to 373 adopt a coiled-coil conformation; the sequence is LKRVAEERGESWEQKLTQLRKNKQW.

Belongs to the ferredoxin--NADP reductase type 1 family. Requires FAD as cofactor. Expressed in shoots and roots. Less abundant in roots than RFNR2.

Its subcellular location is the plastid. The protein localises to the chloroplast. The enzyme catalyses 2 reduced [2Fe-2S]-[ferredoxin] + NADP(+) + H(+) = 2 oxidized [2Fe-2S]-[ferredoxin] + NADPH. Maintains the supply of reduced ferredoxin under non-photosynthetic conditions. The polypeptide is Ferredoxin--NADP reductase, root isozyme 1, chloroplastic (RFNR1) (Arabidopsis thaliana (Mouse-ear cress)).